The primary structure comprises 70 residues: Large ribosomal subunit protein eL43 (70 aa).

Positions 36, 39, 55, and 58 each coordinate Zn(2+). Residues 36 to 58 (CPVCKTTGKVVRIASGVWYCKKC) form a C4-type zinc finger.

It belongs to the eukaryotic ribosomal protein eL43 family. Putative zinc-binding subfamily. As to quaternary structure, part of the 50S ribosomal subunit. Zn(2+) serves as cofactor.

Its function is as follows. Binds to the 23S rRNA. This is Large ribosomal subunit protein eL43 from Sulfurisphaera tokodaii (strain DSM 16993 / JCM 10545 / NBRC 100140 / 7) (Sulfolobus tokodaii).